The sequence spans 215 residues: Ribosomal RNA small subunit methyltransferase G (215 aa).

S-adenosyl-L-methionine-binding positions include Gly-78, Leu-83, 128–129 (AE), and Arg-146.

The protein belongs to the methyltransferase superfamily. RNA methyltransferase RsmG family.

The protein resides in the cytoplasm. The catalysed reaction is guanosine(527) in 16S rRNA + S-adenosyl-L-methionine = N(7)-methylguanosine(527) in 16S rRNA + S-adenosyl-L-homocysteine. Its function is as follows. Specifically methylates the N7 position of guanine in position 527 of 16S rRNA. In Anaeromyxobacter dehalogenans (strain 2CP-1 / ATCC BAA-258), this protein is Ribosomal RNA small subunit methyltransferase G.